The primary structure comprises 482 residues: Probable glycine dehydrogenase (decarboxylating) subunit 2 (482 aa).

Lys-269 bears the N6-(pyridoxal phosphate)lysine mark.

Belongs to the GcvP family. C-terminal subunit subfamily. In terms of assembly, the glycine cleavage system is composed of four proteins: P, T, L and H. In this organism, the P 'protein' is a heterodimer of two subunits. Requires pyridoxal 5'-phosphate as cofactor.

The catalysed reaction is N(6)-[(R)-lipoyl]-L-lysyl-[glycine-cleavage complex H protein] + glycine + H(+) = N(6)-[(R)-S(8)-aminomethyldihydrolipoyl]-L-lysyl-[glycine-cleavage complex H protein] + CO2. Functionally, the glycine cleavage system catalyzes the degradation of glycine. The P protein binds the alpha-amino group of glycine through its pyridoxal phosphate cofactor; CO(2) is released and the remaining methylamine moiety is then transferred to the lipoamide cofactor of the H protein. The chain is Probable glycine dehydrogenase (decarboxylating) subunit 2 from Pelodictyon phaeoclathratiforme (strain DSM 5477 / BU-1).